The primary structure comprises 232 residues: Cytidylate kinase (232 aa).

G10–T18 serves as a coordination point for ATP.

The protein belongs to the cytidylate kinase family. Type 1 subfamily.

It is found in the cytoplasm. It catalyses the reaction CMP + ATP = CDP + ADP. The enzyme catalyses dCMP + ATP = dCDP + ADP. This chain is Cytidylate kinase, found in Phytoplasma mali (strain AT).